The primary structure comprises 172 residues: WW domain binding protein VOPP1 (172 aa).

Residues 1–22 (MRRQPAKVAALLLGLLLECTEA) form the signal peptide. Residues 23-60 (KKHCWYFEGLYPTYYICRSYEDCCGSRCCVRALSIQRL) are Extracellular-facing. Residues 61-81 (WYFWFLLMMGVLFCCGAGFFI) traverse the membrane as a helical segment. At 82–172 (RRRMYPPPLI…PPYEQVVKAK (91 aa)) the chain is on the cytoplasmic side. Residues 102 to 153 (RQPPNPGPGAQQPGPPYYTDPGGPGMNPVGNSMAMAFQVPPNSPQGSVACPP) are disordered. The segment covering 104-119 (PPNPGPGAQQPGPPYY) has biased composition (pro residues).

This sequence belongs to the VOPP1/ECOP family. As to quaternary structure, interacts with WWOX (via WW domain). In terms of tissue distribution, widely expressed with highest levels in thymus and ovary.

The protein resides in the cytoplasmic vesicle membrane. Its subcellular location is the late endosome membrane. The protein localises to the lysosome membrane. Functionally, increases the transcriptional activity of NFKB1 by facilitating its nuclear translocation, DNA-binding and associated apoptotic response, when overexpressed. May sequester WWOX in lysosomal vesicles and thereby regulate WWOX role as tumor suppressor. The chain is WW domain binding protein VOPP1 from Homo sapiens (Human).